The primary structure comprises 500 residues: Histidine--tRNA ligase (500 aa).

Belongs to the class-II aminoacyl-tRNA synthetase family. Homodimer.

The protein localises to the cytoplasm. The catalysed reaction is tRNA(His) + L-histidine + ATP = L-histidyl-tRNA(His) + AMP + diphosphate + H(+). This chain is Histidine--tRNA ligase, found in Ruegeria sp. (strain TM1040) (Silicibacter sp.).